The following is an 86-amino-acid chain: Weak neurotoxin 5 (86 aa).

The first 21 residues, 1–21 (MKTLLLTLVVVTIVCLDLGYT), serve as a signal peptide directing secretion. Intrachain disulfides connect Cys-24–Cys-45, Cys-27–Cys-32, Cys-38–Cys-63, Cys-67–Cys-78, and Cys-79–Cys-84.

This sequence belongs to the three-finger toxin family. Ancestral subfamily. Orphan group II sub-subfamily. Expressed by the venom gland.

It localises to the secreted. Binds with low affinity to muscular and very low affinity to neuronal (alpha-7/CHRNA7) nicotinic acetylcholine receptor (nAChR). This chain is Weak neurotoxin 5, found in Naja sputatrix (Malayan spitting cobra).